Reading from the N-terminus, the 610-residue chain is MSEIFDAKAFLKTVTSQPGVYRMYDAGGTVIYVGKAKDLKKRLSSYFRSNLASRKTEALVAQIQHIDVTVTHTETEALLLEHNYIKLYQPRYNVLLRDDKSYPFIFLSGDTHPRLAMHRGAKHAKGEYFGPFPNGYAVRETLALLQKIFPIRQCENSVYRNRSRPCLQYQIGRCLGPCVAGLVSEEEYAQQVEYVRLFLSGKDDQVLTQLIARMEKASQDLAFEEAARIRDQIQAVRRVTEKQFVSNAGDDLDVIGVAFDAGMACVHVLFIRQGKVLGSRSYFPKVPGGTELGEVVETFVGQFYLQGSQMRTLPGEILLDFNLSDKTLLADSLSELAGRSIHVQTKPRGDRARYLKLARTNAATALITKLSQQSTITQRLTALAAVLKLPAIKRMECFDISHTMGEQTVASCVVFDANGPLRAEYRRYNIAGITPGDDYAAMNQVLRRRYGKAIEESKIPDVILIDGGKGQLAQAKAVFAELDVPWDKHRPLLLGVAKGADRKAGLEILFFEPEGEGFSLPPDSPALHVIQHIRDESHDHAIGGHRKKRAKVKNTSTLETIEGVGPKRRQMLLKYMGGLQGLRNASVEEIAKVPGISQGLAEKIFWSLKH.

Positions 16-94 (SQPGVYRMYD…IKLYQPRYNV (79 aa)) constitute a GIY-YIG domain. In terms of domain architecture, UVR spans 204–239 (DQVLTQLIARMEKASQDLAFEEAARIRDQIQAVRRV).

Belongs to the UvrC family. As to quaternary structure, interacts with UvrB in an incision complex.

The protein localises to the cytoplasm. The UvrABC repair system catalyzes the recognition and processing of DNA lesions. UvrC both incises the 5' and 3' sides of the lesion. The N-terminal half is responsible for the 3' incision and the C-terminal half is responsible for the 5' incision. The polypeptide is UvrABC system protein C (Salmonella gallinarum (strain 287/91 / NCTC 13346)).